Reading from the N-terminus, the 119-residue chain is Protein TusC (119 aa).

It belongs to the DsrF/TusC family. Heterohexamer, formed by a dimer of trimers. The hexameric TusBCD complex contains 2 copies each of TusB, TusC and TusD. The TusBCD complex interacts with TusE.

Its subcellular location is the cytoplasm. Its function is as follows. Part of a sulfur-relay system required for 2-thiolation of 5-methylaminomethyl-2-thiouridine (mnm(5)s(2)U) at tRNA wobble positions. The protein is Protein TusC of Pectobacterium atrosepticum (strain SCRI 1043 / ATCC BAA-672) (Erwinia carotovora subsp. atroseptica).